An 83-amino-acid chain; its full sequence is U5-theraphotoxin-Hs1c (83 aa).

An N-terminal signal peptide occupies residues 1 to 21; the sequence is MKTSMFLTLTGLVLLFVVCYA. A propeptide spanning residues 22–49 is cleaved from the precursor; it reads SESEEKEFPKELLSSIFAADSDFKVEER. Intrachain disulfides connect Cys-51/Cys-63, Cys-56/Cys-68, and Cys-62/Cys-75.

It belongs to the neurotoxin 10 (Hwtx-1) family. 51 (Hntx-8) subfamily. Hntx-8 sub-subfamily. As to expression, expressed by the venom gland.

It is found in the secreted. Agglutinates erythrocytes. The chain is U5-theraphotoxin-Hs1c from Cyriopagopus schmidti (Chinese bird spider).